The sequence spans 195 residues: FMN-dependent NADH:quinone oxidoreductase (195 aa).

FMN contacts are provided by residues S9, 15–17 (SVS), 85–88 (MYNF), and 129–132 (SRGG).

The protein belongs to the azoreductase type 1 family. As to quaternary structure, homodimer. FMN serves as cofactor.

It catalyses the reaction 2 a quinone + NADH + H(+) = 2 a 1,4-benzosemiquinone + NAD(+). The catalysed reaction is N,N-dimethyl-1,4-phenylenediamine + anthranilate + 2 NAD(+) = 2-(4-dimethylaminophenyl)diazenylbenzoate + 2 NADH + 2 H(+). Its function is as follows. Quinone reductase that provides resistance to thiol-specific stress caused by electrophilic quinones. Functionally, also exhibits azoreductase activity. Catalyzes the reductive cleavage of the azo bond in aromatic azo compounds to the corresponding amines. The chain is FMN-dependent NADH:quinone oxidoreductase from Stenotrophomonas maltophilia (strain K279a).